Reading from the N-terminus, the 132-residue chain is Small ribosomal subunit protein uS8 (132 aa).

The protein belongs to the universal ribosomal protein uS8 family. Part of the 30S ribosomal subunit. Contacts proteins S5 and S12.

In terms of biological role, one of the primary rRNA binding proteins, it binds directly to 16S rRNA central domain where it helps coordinate assembly of the platform of the 30S subunit. The sequence is that of Small ribosomal subunit protein uS8 from Xanthomonas euvesicatoria pv. vesicatoria (strain 85-10) (Xanthomonas campestris pv. vesicatoria).